Reading from the N-terminus, the 542-residue chain is CTP synthase (542 aa).

Residues 1–265 (MARYVFITGG…DDEVLAAFGI (265 aa)) form an amidoligase domain region. Position 13 (S13) interacts with CTP. S13 provides a ligand contact to UTP. ATP contacts are provided by residues 14-19 (SLGKGI) and D71. Residues D71 and E139 each contribute to the Mg(2+) site. Residues 146-148 (DIE), 186-191 (KTKPTQ), and K222 contribute to the CTP site. Residues 186 to 191 (KTKPTQ) and K222 each bind UTP. In terms of domain architecture, Glutamine amidotransferase type-1 spans 291 to 541 (TIAIVGKYTG…IEAATEQSRL (251 aa)). Position 353 (G353) interacts with L-glutamine. The active-site Nucleophile; for glutamine hydrolysis is the C380. Residues 381–384 (FGMQ), E404, and R469 each bind L-glutamine. Catalysis depends on residues H514 and E516.

Belongs to the CTP synthase family. As to quaternary structure, homotetramer.

It carries out the reaction UTP + L-glutamine + ATP + H2O = CTP + L-glutamate + ADP + phosphate + 2 H(+). The catalysed reaction is L-glutamine + H2O = L-glutamate + NH4(+). The enzyme catalyses UTP + NH4(+) + ATP = CTP + ADP + phosphate + 2 H(+). It participates in pyrimidine metabolism; CTP biosynthesis via de novo pathway; CTP from UDP: step 2/2. With respect to regulation, allosterically activated by GTP, when glutamine is the substrate; GTP has no effect on the reaction when ammonia is the substrate. The allosteric effector GTP functions by stabilizing the protein conformation that binds the tetrahedral intermediate(s) formed during glutamine hydrolysis. Inhibited by the product CTP, via allosteric rather than competitive inhibition. Functionally, catalyzes the ATP-dependent amination of UTP to CTP with either L-glutamine or ammonia as the source of nitrogen. Regulates intracellular CTP levels through interactions with the four ribonucleotide triphosphates. The polypeptide is CTP synthase (Rhizobium leguminosarum bv. trifolii (strain WSM2304)).